A 582-amino-acid polypeptide reads, in one-letter code: MSEAALVPPALSTNQTEETFNFQQYELLRQDRAAHLGPGITDLASLKERIRSYYAIESLADHLNSHAEYRSITLQFPDDLLFDSALVAEELQALLPDLQCARTDAPAQADTTCSCGTQKTCADSKDSADGRKIWILADTAYSPCCVDEVAAEHVQADVVVHFGDTCLNPVETLPVVYIFGEPYLDRAKVISLFTERYDKDAKVCLMANAPYSRHLESLSGELSQLGYSNLVFTDVALPDTPNAAATILGVSDSHPISHKLYASGDRVYYGAKEQLLCEEQLQSFELFHIGLPPDPRLLFLSTKFQGVTAYDTQKRQIAKGPFPAMMRRYRFMHVARTASTIGILVNTLSLKSTRSLISSLVELIRSCGKKHYMFVVGKPNVAKLANFEPVDVWCVLGCGHGGIVLDHANEFYKPIVTPYELTLALAPELSWTGAWVVDFNTVIDGISADLGLQAGAIPAENVPEFDAVTGKYVGNSRPLRELNHLEIESPQESITTGSTELVKKFSGALTIGSTVSTSAQFLQARQWTGLGSDFNAEDSYEEEGATVEEGLSGVARGYQYDVSNAEHTDADVPKTSGRVMNT.

Cys-145, Cys-166, and Cys-398 together coordinate [4Fe-4S] cluster.

Belongs to the DPH1/DPH2 family. DPH2 subfamily. Component of the 2-(3-amino-3-carboxypropyl)histidine synthase complex composed of DPH1, DPH2, DPH3 and a NADH-dependent reductase, predominantly CBR1. [4Fe-4S] cluster serves as cofactor.

Its subcellular location is the cytoplasm. The protein operates within protein modification; peptidyl-diphthamide biosynthesis. Functionally, required for the first step of diphthamide biosynthesis, a post-translational modification of histidine which occurs in elongation factor 2. DPH1 and DPH2 transfer a 3-amino-3-carboxypropyl (ACP) group from S-adenosyl-L-methionine (SAM) to a histidine residue, the reaction is assisted by a reduction system comprising DPH3 and a NADH-dependent reductase, predominantly CBR1. Facilitates the reduction of the catalytic iron-sulfur cluster found in the DPH1 subunit. The protein is 2-(3-amino-3-carboxypropyl)histidine synthase subunit 2 (DPH2) of Eremothecium gossypii (strain ATCC 10895 / CBS 109.51 / FGSC 9923 / NRRL Y-1056) (Yeast).